We begin with the raw amino-acid sequence, 413 residues long: Gamma-DL-glutamyl hydrolase (413 aa).

A signal peptide spans 1–32 (MNTLANWKKFLLVAVIICFLVPIMTKAEIAEA). 3 NlpC/P60 domains span residues 33 to 159 (DTSS…RRIA), 163 to 287 (ATAD…RRFD), and 291 to 413 (IPKE…IRVQ). Cys194 acts as the Nucleophile in catalysis. His247 functions as the Proton acceptor in the catalytic mechanism. Gln259 is an active-site residue.

This sequence belongs to the peptidase C40 family.

It localises to the secreted. Its subcellular location is the cell wall. Its activity is regulated as follows. Inhibited by pretreatment with 1 mM 4-(hydroxymercuri)benzoate, a sulfhydryl inhibitor. In terms of biological role, cleaves, in an endo-type manner, the gamma-glutamyl bond between D-glutamate and L-glutamate of poly-gamma-glutamate (PGA). The protein is Gamma-DL-glutamyl hydrolase (pgdS) of Bacillus subtilis (strain 168).